The sequence spans 325 residues: Phospho-N-acetylmuramoyl-pentapeptide-transferase (325 aa).

Transmembrane regions (helical) follow at residues A9–L29, T53–F73, T77–L97, K112–G132, L154–V174, G182–L202, E204–Y224, V231–L251, F257–I277, and K305–L325.

This sequence belongs to the glycosyltransferase 4 family. MraY subfamily. Mg(2+) serves as cofactor.

Its subcellular location is the cell membrane. It carries out the reaction UDP-N-acetyl-alpha-D-muramoyl-L-alanyl-gamma-D-glutamyl-meso-2,6-diaminopimeloyl-D-alanyl-D-alanine + di-trans,octa-cis-undecaprenyl phosphate = di-trans,octa-cis-undecaprenyl diphospho-N-acetyl-alpha-D-muramoyl-L-alanyl-D-glutamyl-meso-2,6-diaminopimeloyl-D-alanyl-D-alanine + UMP. Its pathway is cell wall biogenesis; peptidoglycan biosynthesis. Its function is as follows. Catalyzes the initial step of the lipid cycle reactions in the biosynthesis of the cell wall peptidoglycan: transfers peptidoglycan precursor phospho-MurNAc-pentapeptide from UDP-MurNAc-pentapeptide onto the lipid carrier undecaprenyl phosphate, yielding undecaprenyl-pyrophosphoryl-MurNAc-pentapeptide, known as lipid I. This chain is Phospho-N-acetylmuramoyl-pentapeptide-transferase, found in Carboxydothermus hydrogenoformans (strain ATCC BAA-161 / DSM 6008 / Z-2901).